The primary structure comprises 186 residues: Large ribosomal subunit protein uL22 (186 aa).

The tract at residues 160–186 (AAENEPAKKKLSKKKLQRQKEKMMRNE) is disordered. Basic and acidic residues predominate over residues 177-186 (RQKEKMMRNE).

It belongs to the universal ribosomal protein uL22 family.

This chain is Large ribosomal subunit protein uL22 (RpL17), found in Aedes aegypti (Yellowfever mosquito).